We begin with the raw amino-acid sequence, 447 residues long: Tubulin beta-2 chain (447 aa).

GTP contacts are provided by Q11, E69, S138, G142, T143, G144, N204, and N226. E69 contributes to the Mg(2+) binding site. The segment at 426–447 (QDAGVDEEEEEYEEEAPLEEEV) is disordered. Acidic residues predominate over residues 429 to 447 (GVDEEEEEYEEEAPLEEEV).

Belongs to the tubulin family. As to quaternary structure, dimer of alpha and beta chains. A typical microtubule is a hollow water-filled tube with an outer diameter of 25 nm and an inner diameter of 15 nM. Alpha-beta heterodimers associate head-to-tail to form protofilaments running lengthwise along the microtubule wall with the beta-tubulin subunit facing the microtubule plus end conferring a structural polarity. Microtubules usually have 13 protofilaments but different protofilament numbers can be found in some organisms and specialized cells. Mg(2+) is required as a cofactor.

The protein localises to the cytoplasm. It is found in the cytoskeleton. In terms of biological role, tubulin is the major constituent of microtubules, a cylinder consisting of laterally associated linear protofilaments composed of alpha- and beta-tubulin heterodimers. Microtubules grow by the addition of GTP-tubulin dimers to the microtubule end, where a stabilizing cap forms. Below the cap, tubulin dimers are in GDP-bound state, owing to GTPase activity of alpha-tubulin. In Colletotrichum gloeosporioides (Anthracnose fungus), this protein is Tubulin beta-2 chain (TUB2).